The sequence spans 147 residues: Ribonuclease H (147 aa).

The 142-residue stretch at 1 to 142 (MAGKVVMYTD…ADELANRGVR (142 aa)) folds into the RNase H type-1 domain. Residues Asp10, Glu48, Asp70, and Asp134 each contribute to the Mg(2+) site.

This sequence belongs to the RNase H family. In terms of assembly, monomer. Requires Mg(2+) as cofactor.

The protein localises to the cytoplasm. The catalysed reaction is Endonucleolytic cleavage to 5'-phosphomonoester.. Endonuclease that specifically degrades the RNA of RNA-DNA hybrids. The polypeptide is Ribonuclease H (Marinobacter nauticus (strain ATCC 700491 / DSM 11845 / VT8) (Marinobacter aquaeolei)).